We begin with the raw amino-acid sequence, 145 residues long: Cuticle protein 65 (145 aa).

Repeat copies occupy residues 27 to 30 (AAPA), 33 to 37 (AAPAV), 39 to 42 (AAPA), 86 to 89 (AAPV), 92 to 95 (AAPA), 98 to 101 (AAPA), and 123 to 126 (AAPA).

Component of the cuticle of migratory locust which contains more than 100 different structural proteins. The polypeptide is Cuticle protein 65 (Locusta migratoria (Migratory locust)).